Here is a 583-residue protein sequence, read N- to C-terminus: Pectinesterase/pectinesterase inhibitor U1 (583 aa).

An N-terminal signal peptide occupies residues 1 to 40 (MTRVEDFFSKQIDFCKRKKKIYLAIVASVLLVAAVIGVVA). The pectinesterase inhibitor U1 stretch occupies residues 60 to 221 (SSAHAIVKSA…EKMCSNALAM (162 aa)). N-linked (GlcNAc...) asparagine glycosylation is found at asparagine 85, asparagine 105, and asparagine 224. Residues 272-570 (DVVVAADGSG…TPGRFIAGGS (299 aa)) are pectinesterase U1. Residues threonine 347 and glutamine 377 each coordinate substrate. Aspartate 400 (proton donor; for pectinesterase activity) is an active-site residue. Cysteine 414 and cysteine 434 form a disulfide bridge. Aspartate 421 serves as the catalytic Nucleophile; for pectinesterase activity. Residues arginine 489 and tryptophan 491 each contribute to the substrate site.

This sequence in the N-terminal section; belongs to the PMEI family. It in the C-terminal section; belongs to the pectinesterase family.

It localises to the secreted. Its subcellular location is the cell wall. The catalysed reaction is [(1-&gt;4)-alpha-D-galacturonosyl methyl ester](n) + n H2O = [(1-&gt;4)-alpha-D-galacturonosyl](n) + n methanol + n H(+). The protein operates within glycan metabolism; pectin degradation; 2-dehydro-3-deoxy-D-gluconate from pectin: step 1/5. Functionally, acts in the modification of cell walls via demethylesterification of cell wall pectin. The chain is Pectinesterase/pectinesterase inhibitor U1 (PMEU1) from Solanum lycopersicum (Tomato).